We begin with the raw amino-acid sequence, 557 residues long: Ribonuclease J 2 (557 aa).

Residues His76, His78, His144, and Glu166 each coordinate Zn(2+). 366 to 370 (HASSH) lines the substrate pocket.

The protein belongs to the metallo-beta-lactamase superfamily. RNA-metabolizing metallo-beta-lactamase-like family. Bacterial RNase J subfamily. In terms of assembly, homodimer. Component of a possible RNA degradosome complex composed of cshA, eno, pfkA, pnp, rnjA, rnjB, rnpA and rny. Interacts specifically with RNase J1. The cofactor is Zn(2+).

Its subcellular location is the cytoplasm. Functionally, an RNase that has 5'-3' exonuclease and endonuclease activity, with the exonuclease activity probably being most important in vivo. Involved in maturation of 16S rRNA, rnpB (the RNA component of RNase P) maturation and degradation, and mRNA maturation and/or decay. This subunit probably plays a structural rather than enzymatic role as mutation of its putative active site gives no phenotype, and its deletion is partially complemented by inactive RNase J1. This is Ribonuclease J 2 from Staphylococcus aureus (strain NCTC 8325 / PS 47).